A 982-amino-acid polypeptide reads, in one-letter code: E3 ubiquitin-protein ligase CBL-B (982 aa).

Residues 35–167 form a 4H region; it reads PPKQAAADRR…KAIFPNGQFQ (133 aa). In terms of domain architecture, Cbl-PTB spans 35–343; the sequence is PPKQAAADRR…GRSYNPDLTG (309 aa). The segment at 168–240 is EF-hand-like; the sequence is GDNFRITKAD…FEFDIFTRLF (73 aa). The Ca(2+) site is built by D221, T223, N225, Y227, and E232. Positions 241–343 are SH2-like; the sequence is QPWGSILRNW…GRSYNPDLTG (103 aa). S282 is modified (phosphoserine; by PKC/PRKCQ). R286 lines the 4-O-phospho-L-tyrosine pocket. A linker region spans residues 344–372; it reads LCEPTPHDHIKVTQEQYELYCEMGSTFQL. Y363 is subject to Phosphotyrosine. The segment at 373-412 adopts an RING-type zinc-finger fold; sequence CKICAENDKDVKIEPCGHLMCTSCLTAWQESDGQGCPFCR. The segment at 466–571 is disordered; the sequence is NVRKCTDRQN…PPPIPPDNRL (106 aa). A compositionally biased stretch (polar residues) spans 473-486; that stretch reads RQNSPVTSPGSSPL. S476, S480, S484, S521, S525, and S529 each carry phosphoserine. The interval 543–568 is interaction with VAV1; sequence PLPAPPPPLRDPPPPPPERPPPIPPD. Residues 544–567 show a composition bias toward pro residues; sequence LPAPPPPLRDPPPPPPERPPPIPP. The residue at position 634 (S634) is a Phosphoserine. Phosphotyrosine occurs at positions 665 and 709. 2 disordered regions span residues 688 to 731 and 769 to 929; these read GPLA…NVKP and FDSA…EAAL. Polar residues predominate over residues 715–725; it reads HPVSLNSQPSH. A compositionally biased stretch (pro residues) spans 819-828; it reads PSLPPPPPPA. Positions 838 to 848 are enriched in low complexity; sequence PPGSSSRPSSG. The segment covering 880–899 has biased composition (polar residues); that stretch reads VKTNRTSQDYDQLPSCSDGS. At Y889 the chain carries Phosphotyrosine. The segment at 891-927 is interaction with SH3KBP1; that stretch reads QLPSCSDGSQAPARPPKPRPRRTAPEIHHRKPHGPEA. Basic residues predominate over residues 906–922; sequence PKPRPRRTAPEIHHRKP. The UBA domain occupies 931–970; the sequence is NVDAKIAKLMGEGYAFEEVKRALEIAQNNVEVARSILREF.

Interacts with SH3 domain-containing proteins LCK, CRK and SORBS1. Interacts with LCP2 and ZAP70. Interacts with CBL. Interacts with SH3 domain-containing proteins VAV1, FYN, FGR, PLCG1, GRB2, CRKL, PIK3R1 and SH3KBP1/CIN85. Identified in heterotrimeric complexes with SH3KBP1/CIN85, CD2AP and ARHGEF7, where one CBLB peptide binds two copies of the other protein. Interacts with poly-ubiquitinated proteins. Dimerization is required for the binding of poly-ubiquitin, but not for the binding of mono-ubiquitin. Interacts with EGFR (phosphorylated). Interacts with IFT20. In terms of processing, phosphorylated on tyrosine and serine residues upon TCR or BCR activation, and upon various types of cell stimulation. Post-translationally, auto-ubiquitinated upon EGF-mediated cell activation or upon T-cell costimulation by CD28; which promotes proteasomal degradation. Expressed in placenta, heart, lung, kidney, spleen, ovary and testis, as well as fetal brain and liver and hematopoietic cell lines, but not in adult brain, liver, pancreas, salivary gland, or skeletal muscle. Present in lymphocytes (at protein level).

Its subcellular location is the cytoplasm. It carries out the reaction S-ubiquitinyl-[E2 ubiquitin-conjugating enzyme]-L-cysteine + [acceptor protein]-L-lysine = [E2 ubiquitin-conjugating enzyme]-L-cysteine + N(6)-ubiquitinyl-[acceptor protein]-L-lysine.. It functions in the pathway protein modification; protein ubiquitination. E3 ubiquitin-protein ligase which accepts ubiquitin from specific E2 ubiquitin-conjugating enzymes, and transfers it to substrates, generally promoting their degradation by the proteasome. Negatively regulates TCR (T-cell receptor), BCR (B-cell receptor) and FCER1 (high affinity immunoglobulin epsilon receptor) signal transduction pathways. In naive T-cells, inhibits VAV1 activation upon TCR engagement and imposes a requirement for CD28 costimulation for proliferation and IL-2 production. Also acts by promoting PIK3R1/p85 ubiquitination, which impairs its recruitment to the TCR and subsequent activation. In activated T-cells, inhibits PLCG1 activation and calcium mobilization upon restimulation and promotes anergy. In B-cells, acts by ubiquitinating SYK and promoting its proteasomal degradation. Slightly promotes SRC ubiquitination. May be involved in EGFR ubiquitination and internalization. May be functionally coupled with the E2 ubiquitin-protein ligase UB2D3. In association with CBL, required for proper feedback inhibition of ciliary platelet-derived growth factor receptor-alpha (PDGFRA) signaling pathway via ubiquitination and internalization of PDGFRA. The chain is E3 ubiquitin-protein ligase CBL-B (CBLB) from Homo sapiens (Human).